We begin with the raw amino-acid sequence, 202 residues long: Small ribosomal subunit protein uS4 (202 aa).

The tract at residues 23–42 (RKNARRAYAPGQHGQARKKR) is disordered. Positions 90 to 153 (MRLDNTVFRL…RSQDLVKRNM (64 aa)) constitute an S4 RNA-binding domain.

Belongs to the universal ribosomal protein uS4 family. In terms of assembly, part of the 30S ribosomal subunit. Contacts protein S5. The interaction surface between S4 and S5 is involved in control of translational fidelity.

One of the primary rRNA binding proteins, it binds directly to 16S rRNA where it nucleates assembly of the body of the 30S subunit. Functionally, with S5 and S12 plays an important role in translational accuracy. The chain is Small ribosomal subunit protein uS4 from Microcystis aeruginosa (strain NIES-843 / IAM M-2473).